A 442-amino-acid polypeptide reads, in one-letter code: Trigger factor (442 aa).

One can recognise a PPIase FKBP-type domain in the interval 163–248 (YDRVTINYCI…IIKIEKKQEL (86 aa)).

It belongs to the FKBP-type PPIase family. Tig subfamily.

The protein resides in the cytoplasm. It carries out the reaction [protein]-peptidylproline (omega=180) = [protein]-peptidylproline (omega=0). Its function is as follows. Involved in protein export. Acts as a chaperone by maintaining the newly synthesized protein in an open conformation. Functions as a peptidyl-prolyl cis-trans isomerase. The polypeptide is Trigger factor (tig) (Buchnera aphidicola subsp. Acyrthosiphon pisum (strain APS) (Acyrthosiphon pisum symbiotic bacterium)).